A 421-amino-acid chain; its full sequence is Serine--tRNA ligase (421 aa).

Residue 227-229 (TSE) coordinates L-serine. Residues 257–259 (RRE) and valine 273 contribute to the ATP site. Glutamate 280 contributes to the L-serine binding site. 344 to 347 (ELTS) contributes to the ATP binding site. Threonine 379 contributes to the L-serine binding site.

This sequence belongs to the class-II aminoacyl-tRNA synthetase family. Type-1 seryl-tRNA synthetase subfamily. In terms of assembly, homodimer. The tRNA molecule binds across the dimer.

It localises to the cytoplasm. The catalysed reaction is tRNA(Ser) + L-serine + ATP = L-seryl-tRNA(Ser) + AMP + diphosphate + H(+). It carries out the reaction tRNA(Sec) + L-serine + ATP = L-seryl-tRNA(Sec) + AMP + diphosphate + H(+). It functions in the pathway aminoacyl-tRNA biosynthesis; selenocysteinyl-tRNA(Sec) biosynthesis; L-seryl-tRNA(Sec) from L-serine and tRNA(Sec): step 1/1. Catalyzes the attachment of serine to tRNA(Ser). Is also able to aminoacylate tRNA(Sec) with serine, to form the misacylated tRNA L-seryl-tRNA(Sec), which will be further converted into selenocysteinyl-tRNA(Sec). The protein is Serine--tRNA ligase of Leifsonia xyli subsp. xyli (strain CTCB07).